Reading from the N-terminus, the 495-residue chain is Cardiolipin synthase A (495 aa).

A run of 2 helical transmembrane segments spans residues 9–29 (IEVL…WLIT) and 46–66 (MAWL…YLLL). 2 PLD phosphodiesterase domains span residues 227–254 (MDLR…IDPK) and 408–435 (EGGL…DMRS). Catalysis depends on residues His-232, Lys-234, Asp-239, His-413, Lys-415, and Asp-420.

It belongs to the phospholipase D family. Cardiolipin synthase subfamily. ClsA sub-subfamily.

Its subcellular location is the cell membrane. The enzyme catalyses 2 a 1,2-diacyl-sn-glycero-3-phospho-(1'-sn-glycerol) = a cardiolipin + glycerol. Functionally, catalyzes the reversible phosphatidyl group transfer from one phosphatidylglycerol molecule to another to form cardiolipin (CL) (diphosphatidylglycerol) and glycerol. The polypeptide is Cardiolipin synthase A (Wigglesworthia glossinidia brevipalpis).